Here is a 126-residue protein sequence, read N- to C-terminus: Small ribosomal subunit protein uS12 (126 aa).

Residues methionine 1–proline 28 form a disordered region. Residues arginine 9 to serine 19 are compositionally biased toward basic residues. A 3-methylthioaspartic acid modification is found at aspartate 89. The interval glycine 106–lysine 126 is disordered. Positions lysine 109 to lysine 126 are enriched in basic residues.

It belongs to the universal ribosomal protein uS12 family. Part of the 30S ribosomal subunit. Contacts proteins S8 and S17. May interact with IF1 in the 30S initiation complex.

In terms of biological role, with S4 and S5 plays an important role in translational accuracy. Interacts with and stabilizes bases of the 16S rRNA that are involved in tRNA selection in the A site and with the mRNA backbone. Located at the interface of the 30S and 50S subunits, it traverses the body of the 30S subunit contacting proteins on the other side and probably holding the rRNA structure together. The combined cluster of proteins S8, S12 and S17 appears to hold together the shoulder and platform of the 30S subunit. This chain is Small ribosomal subunit protein uS12, found in Opitutus terrae (strain DSM 11246 / JCM 15787 / PB90-1).